A 464-amino-acid polypeptide reads, in one-letter code: UDP-N-acetylmuramate--L-alanine ligase (464 aa).

112 to 118 (GTHGKTT) contributes to the ATP binding site.

It belongs to the MurCDEF family.

The protein resides in the cytoplasm. The catalysed reaction is UDP-N-acetyl-alpha-D-muramate + L-alanine + ATP = UDP-N-acetyl-alpha-D-muramoyl-L-alanine + ADP + phosphate + H(+). It functions in the pathway cell wall biogenesis; peptidoglycan biosynthesis. Its function is as follows. Cell wall formation. This is UDP-N-acetylmuramate--L-alanine ligase from Acidithiobacillus ferrooxidans (strain ATCC 23270 / DSM 14882 / CIP 104768 / NCIMB 8455) (Ferrobacillus ferrooxidans (strain ATCC 23270)).